The primary structure comprises 178 residues: uncharacterized protein (178 aa).

Residues 7-27 (LAIGTAILLIGMAYWTVSIVE) traverse the membrane as a helical segment.

It is found in the membrane. This is an uncharacterized protein from Methanocaldococcus jannaschii (strain ATCC 43067 / DSM 2661 / JAL-1 / JCM 10045 / NBRC 100440) (Methanococcus jannaschii).